Consider the following 445-residue polypeptide: Probable glycine dehydrogenase (decarboxylating) subunit 1 (445 aa).

The protein belongs to the GcvP family. N-terminal subunit subfamily. In terms of assembly, the glycine cleavage system is composed of four proteins: P, T, L and H. In this organism, the P 'protein' is a heterodimer of two subunits.

It catalyses the reaction N(6)-[(R)-lipoyl]-L-lysyl-[glycine-cleavage complex H protein] + glycine + H(+) = N(6)-[(R)-S(8)-aminomethyldihydrolipoyl]-L-lysyl-[glycine-cleavage complex H protein] + CO2. Its function is as follows. The glycine cleavage system catalyzes the degradation of glycine. The P protein binds the alpha-amino group of glycine through its pyridoxal phosphate cofactor; CO(2) is released and the remaining methylamine moiety is then transferred to the lipoamide cofactor of the H protein. The chain is Probable glycine dehydrogenase (decarboxylating) subunit 1 from Chlorobium chlorochromatii (strain CaD3).